Reading from the N-terminus, the 496-residue chain is Glutamate--tRNA ligase (496 aa).

The 'HIGH' region motif lies at Pro-11 to Asn-21. Positions Lys-255–Arg-259 match the 'KMSKS' region motif. An ATP-binding site is contributed by Lys-258.

It belongs to the class-I aminoacyl-tRNA synthetase family. Glutamate--tRNA ligase type 1 subfamily. In terms of assembly, monomer.

Its subcellular location is the cytoplasm. It catalyses the reaction tRNA(Glu) + L-glutamate + ATP = L-glutamyl-tRNA(Glu) + AMP + diphosphate. In terms of biological role, catalyzes the attachment of glutamate to tRNA(Glu) in a two-step reaction: glutamate is first activated by ATP to form Glu-AMP and then transferred to the acceptor end of tRNA(Glu). This chain is Glutamate--tRNA ligase, found in Streptococcus pyogenes serotype M49 (strain NZ131).